The following is a 250-amino-acid chain: Pyrroloquinoline-quinone synthase (250 aa).

It belongs to the PqqC family.

The catalysed reaction is 6-(2-amino-2-carboxyethyl)-7,8-dioxo-1,2,3,4,7,8-hexahydroquinoline-2,4-dicarboxylate + 3 O2 = pyrroloquinoline quinone + 2 H2O2 + 2 H2O + H(+). The protein operates within cofactor biosynthesis; pyrroloquinoline quinone biosynthesis. In terms of biological role, ring cyclization and eight-electron oxidation of 3a-(2-amino-2-carboxyethyl)-4,5-dioxo-4,5,6,7,8,9-hexahydroquinoline-7,9-dicarboxylic-acid to PQQ. The chain is Pyrroloquinoline-quinone synthase from Ectopseudomonas mendocina (strain ymp) (Pseudomonas mendocina).